A 383-amino-acid chain; its full sequence is S-adenosylmethionine synthase (383 aa).

Histidine 15 serves as a coordination point for ATP. Mg(2+) is bound at residue aspartate 17. Glutamate 43 serves as a coordination point for K(+). L-methionine-binding residues include glutamate 56 and glutamine 99. Residues 99 to 109 (QSPDINQGVDK) form a flexible loop region. ATP contacts are provided by residues 164 to 166 (DAK), 230 to 231 (RF), aspartate 239, 245 to 246 (RK), alanine 262, and lysine 266. Aspartate 239 serves as a coordination point for L-methionine. Residue lysine 270 coordinates L-methionine.

It belongs to the AdoMet synthase family. In terms of assembly, homotetramer; dimer of dimers. Requires Mg(2+) as cofactor. K(+) serves as cofactor.

The protein resides in the cytoplasm. It carries out the reaction L-methionine + ATP + H2O = S-adenosyl-L-methionine + phosphate + diphosphate. Its pathway is amino-acid biosynthesis; S-adenosyl-L-methionine biosynthesis; S-adenosyl-L-methionine from L-methionine: step 1/1. Its function is as follows. Catalyzes the formation of S-adenosylmethionine (AdoMet) from methionine and ATP. The overall synthetic reaction is composed of two sequential steps, AdoMet formation and the subsequent tripolyphosphate hydrolysis which occurs prior to release of AdoMet from the enzyme. This is S-adenosylmethionine synthase from Vibrio atlanticus (strain LGP32) (Vibrio splendidus (strain Mel32)).